The primary structure comprises 303 residues: Cytosolic-abundant heat soluble protein 3 (303 aa).

Residues 1-19 (MSSRQNQQSSSQHSSSSQQ) show a composition bias toward low complexity. The interval 1–67 (MSSRQNQQSS…PGSHSEVHEE (67 aa)) is disordered. Residues 170–257 (ARQDEQDAGM…ESAKAQTNVN (88 aa)) adopt a coiled-coil conformation. 2 CAHS motif regions span residues 184 to 202 (YREE…LERQ) and 221 to 239 (QERE…LELE). The segment covering 270–280 (KGAIQTSADKS) has biased composition (polar residues). The disordered stretch occupies residues 270–303 (KGAIQTSADKSSTTKTGPTTVTQIKHTEQHTERR). Positions 282–291 (TTKTGPTTVT) are enriched in low complexity. The segment covering 294-303 (KHTEQHTERR) has biased composition (basic and acidic residues).

It belongs to the Cytosolic-abundant heat soluble protein (CAHS) family.

The protein resides in the cytoplasm. Its function is as follows. CAHS proteins are cytosolic heat soluble proteins that seem to contribute to the anhydrobiosis in tardigrades, but their specific mechanisms are yet to be identified. It is possible that protection during anhydrobiosis might occur via the stabilization of vitrifying small molecules such as sugars, but not via the direct glass transition of CAHS proteins themselves. The chain is Cytosolic-abundant heat soluble protein 3 from Ramazzottius varieornatus (Water bear).